The primary structure comprises 505 residues: MEKLQYELQGYLEIDRYRKQRFLYPLLFREYIYALAHDHGLNSSIFMKPTENLGYDNDNKSSSLIVKRLITRLHQQNHLIISVNDSRFVGPNRSFYSQTISEGFAGIMEIPFSMRLVPSLERIAKYQNLRSIHSIFPFLEDKLSHLYYVSDILIPHPIHLEILLQTLRTRIRDAPSLHLLRCFLHEHHNWNSLITPKKSTSIFSKENQRLFLFLYNSHVYECESVLVFLRKQSSHLRSISSLAFLERTHFYGKIKHLVVAPRNDSQRTLPLWFFKEPLMHYVRYQGKSIMASRCTNLLMKKWKYYLVNFWQCHFHLWSQPGGIHINELSNHSFYFLGYLSGVRLMPWVIRSQMLENSFMIDTAIKRFDTIVPIFPLIGSLVKAKFCNVSGYPISKSVWADSSDSDIIARFGWICRNLSHYHSGSSKKHSLCRIKYILRLSCARTLARKHKSTVRVICKRLGSKLLEEFLTEEQEIVSFIFRGTRLRSERIWYLDIIRINGLVPHS.

The protein belongs to the intron maturase 2 family. MatK subfamily.

The protein resides in the plastid. The protein localises to the chloroplast. Usually encoded in the trnK tRNA gene intron. Probably assists in splicing its own and other chloroplast group II introns. The polypeptide is Maturase K (Nuphar variegata (Yellow pond lily)).